The chain runs to 694 residues: Methionine--tRNA ligase (694 aa).

The 'HIGH' region motif lies at 12 to 22; it reads PYANGPLHLGH. 4 residues coordinate Zn(2+): Cys143, Cys146, Cys156, and Cys159. The short motif at 330–334 is the 'KMSKS' region element; it reads KMSKS. Lys333 is a binding site for ATP. Residues 550 to 573 show a composition bias toward low complexity; that stretch reads MAAPAAPATTTKPAPSKADAKPAA. The disordered stretch occupies residues 550 to 582; the sequence is MAAPAAPATTTKPAPSKADAKPAAVANPESQTT. A tRNA-binding domain is found at 591–694; it reads DFAKLDLRIG…SGAQPGMPVR (104 aa).

The protein belongs to the class-I aminoacyl-tRNA synthetase family. MetG type 1 subfamily. Homodimer. Requires Zn(2+) as cofactor.

It localises to the cytoplasm. The enzyme catalyses tRNA(Met) + L-methionine + ATP = L-methionyl-tRNA(Met) + AMP + diphosphate. Is required not only for elongation of protein synthesis but also for the initiation of all mRNA translation through initiator tRNA(fMet) aminoacylation. In Xanthomonas euvesicatoria pv. vesicatoria (strain 85-10) (Xanthomonas campestris pv. vesicatoria), this protein is Methionine--tRNA ligase.